The chain runs to 219 residues: Probable GTP-binding protein EngB (219 aa).

Positions 31–205 (VGVEIAFAGR…LSILNEWCHP (175 aa)) constitute an EngB-type G domain. Residues 39–46 (GRSNAGKS), 66–70 (GRTQL), 84–87 (DLPG), 151–154 (TKSD), and 184–186 (FSA) each bind GTP. Ser46 and Thr68 together coordinate Mg(2+).

This sequence belongs to the TRAFAC class TrmE-Era-EngA-EngB-Septin-like GTPase superfamily. EngB GTPase family. Mg(2+) is required as a cofactor.

Necessary for normal cell division and for the maintenance of normal septation. This is Probable GTP-binding protein EngB from Shewanella putrefaciens (strain CN-32 / ATCC BAA-453).